The primary structure comprises 718 residues: MAAKRSRAAMEEQEKTSTRSDDREQAVNRWVLQFYFHQAVAAYRAGRNRDFRQLRDVMQALLVRPLEREPAVAQMLRVMQFLSRIEEGENLDCTFDKETELTPLESAIGILQLIAKEFSVPEKKIELIHKVLKEAAVIVCIKNKEFSKALAVLKRHMEKDTGNQKKRTELQTIIREKNRAHPIIRDFSYVNFQQYMFQFLKTYVDTSEPLLVTMMKSLNSERAEEPKRSSVTPESPSRTEDQEEAYEPLRRVKHSVGTLRRAETAGGVAGAPSCPEMAKDPTGAPEHVGTVKDAVRAPCPAESTEDSQGTPRCAETARDVMGAPSPSEMTKDLLGAPKCTETARDVVRAPSPAESTKDPVGTPGHAETARDVARAPSPAETTKNLPGAPECADTVKNTVRAPSPAERRKDLVRAPKRAETARDVVRAPSPAERVKDTAGASEPMKSASYPTASQPRIAAVKSSKVFSVPVEISEQPAAAAPVHAGVSSRDLERTPFRTVTTYGISVLREAFKMLSNSPDSDALFNKLDETDLPSPQQMSPSVSHRTKRRKEEKNQGSETLDSPEIPHKSKRLFTISKMIMDQGSQCSKSSESPDSSQERVVSSAYRPVQELPDQPVSTKRSSQQRWNSSYGEERKDSWSDEDELFTDAALTETSSNNSTVYGSKKQKWTVQESEWIKDGVRKYGEGRWKTISEKYPFQNRTSVQIKDRYRTMKKLGIA.

Disordered regions lie at residues 1–22 and 219–286; these read MAAK…RSDD and NSER…GAPE. Composition is skewed to basic and acidic residues over residues 8–22 and 219–228; these read AAME…RSDD and NSERAEEPKR. A TRFH dimerization region spans residues 24-220; it reads EQAVNRWVLQ…LVTMMKSLNS (197 aa). Repeat copies occupy residues 257 to 269, 270 to 282, 283 to 295, 296 to 308, 309 to 321, 322 to 334, 335 to 347, 348 to 360, 361 to 373, 374 to 386, 387 to 399, 400 to 412, 413 to 425, 426 to 438, and 439 to 451. A 15 X 13 AA approximate tandem repeats region spans residues 257 to 451; that stretch reads GTLRRAETAG…EPMKSASYPT (195 aa). Disordered stretches follow at residues 342–455 and 524–641; these read TARD…ASQP and FNKL…WSDE. Over residues 405-425 the composition is skewed to basic and acidic residues; that stretch reads AERRKDLVRAPKRAETARDVV. The span at 533–543 shows a compositional bias: polar residues; it reads PSPQQMSPSVS. The Nuclear localization signal signature appears at 545-550; it reads RTKRRK. A compositionally biased stretch (low complexity) spans 584–595; sequence SQCSKSSESPDS. A compositionally biased stretch (polar residues) spans 615 to 630; that stretch reads PVSTKRSSQQRWNSSY. An HTH myb-type domain is found at 664–717; that stretch reads KKQKWTVQESEWIKDGVRKYGEGRWKTISEKYPFQNRTSVQIKDRYRTMKKLGI. The segment at residues 688-713 is a DNA-binding region (H-T-H motif); it reads WKTISEKYPFQNRTSVQIKDRYRTMK.

As to quaternary structure, homodimer. Component of the shelterin complex (telosome). Interacts with TERF2IP/RAP1. As to expression, highly expressed in embryo.

It localises to the nucleus. The protein resides in the chromosome. It is found in the telomere. In terms of biological role, binds the telomeric double-stranded 5'-TTAGGG-3' repeat and plays a central role in telomere maintenance and protection against end-to-end fusion of chromosomes. In addition to its telomeric DNA-binding role, required to recruit a number of factors and enzymes required for telomere protection, including the shelterin complex, TERF2IP/RAP1 and DCLRE1B/Apollo. Component of the shelterin complex (telosome) that is involved in the regulation of telomere length and protection. Shelterin associates with arrays of double-stranded 5'-TTAGGG-3' repeats added by telomerase and protects chromosome ends; without its protective activity, telomeres are no longer hidden from the DNA damage surveillance and chromosome ends are inappropriately processed by DNA repair pathways. Together with DCLRE1B/Apollo, plays a key role in telomeric loop (T loop) formation by generating 3' single-stranded overhang at the leading end telomeres: T loops have been proposed to protect chromosome ends from degradation and repair. Required both to recruit DCLRE1B/Apollo to telomeres and activate the exonuclease activity of DCLRE1B/Apollo. Together with DCLRE1B/Apollo, required to control the amount of DNA topoisomerase (TOP1, TOP2A and TOP2B) needed for telomere replication during fork passage and prevent aberrant telomere topology. Recruits TERF2IP/RAP1 to telomeres, thereby participating in to repressing homology-directed repair (HDR), which can affect telomere length. The sequence is that of Telomeric repeat-binding factor 2 (TERF2) from Gallus gallus (Chicken).